Reading from the N-terminus, the 500-residue chain is MALRVTADVWLARPWQCLHRTRALGTTATLAPKTLKPFEAIPQYSRNKWLKMIQILREQGQENLHLEMHQAFQELGPIFRHSAGGAQIVSVMLPEDAEKLHQVESILPRRMHLEPWVAHRELRGLRRGVFLLNGAEWRFNRLKLNPNVLSPKAVQNFVPMVDEVARDFLEALKKKVRQNARGSLTMDVQQSLFNYTIEASNFALFGERLGLLGHDLNPGSLKFIHALHSMFKSTTQLLFLPRSLTRWTSTQVWKEHFDAWDVISEYANRCIWKVHQELRLGSSQTYSGIVAALITQGALPLDAIKANSMKLTAGSVDTTAIPLVMTLFELARNPDVQQALRQETLAAEASIAANPQKAMSDLPLLRAALKETLRLYPVGGFLERILNSDLVLQNYHVPAGTLVLLYLYSMGRNPAVFPRPERYMPQRWLERKRSFQHLAFGFGVRQCLGRRLAEVEMLLLLHHMLKTFQVETLRQEDVQMAYRFVLMPSSSPVLTFRPIS.

The N-terminal 24 residues, 1-24 (MALRVTADVWLARPWQCLHRTRAL), are a transit peptide targeting the mitochondrion. Cysteine 447 serves as a coordination point for heme.

It belongs to the cytochrome P450 family. Heme is required as a cofactor. As to expression, expressed in the adrenal cortex and in different brain tissues, including hippocampus, hypothalamus, cerebellum, cerebral cortex, and midbrain.

It localises to the mitochondrion membrane. The catalysed reaction is a steroid + 2 reduced [adrenodoxin] + O2 + 2 H(+) = an 11beta-hydroxysteroid + 2 oxidized [adrenodoxin] + H2O. It catalyses the reaction 21-hydroxyprogesterone + 2 reduced [adrenodoxin] + O2 + 2 H(+) = corticosterone + 2 oxidized [adrenodoxin] + H2O. It carries out the reaction 21-hydroxyprogesterone + 2 reduced [adrenodoxin] + O2 + 2 H(+) = 18-hydroxy-11-deoxycorticosterone + 2 oxidized [adrenodoxin] + H2O. The enzyme catalyses 21-hydroxyprogesterone + 2 reduced [adrenodoxin] + O2 + 2 H(+) = 19-hydroxy-11-deoxycorticosterone + 2 oxidized [adrenodoxin] + H2O. In terms of biological role, a cytochrome P450 monooxygenase involved in the biosynthesis of adrenal corticoids. Catalyzes the hydroxylation of steroids at 11beta, 18- or 19-positions, with preferred regioselectivity at 11beta and 18. Converts 11-deoxycorticosterone into corticosterone, 18-hydroxy-11-deoxycorticosterone, and/or 19-hydroxy-11-deoxycorticosterone, but not to 18-hydroxycorticosterone or aldosterone. Mechanistically, uses molecular oxygen inserting one oxygen atom into a substrate for hydroxylation and reducing the second into a water molecule. Two electrons are provided by NADPH via a two-protein mitochondrial transfer system comprising flavoprotein FDXR (adrenodoxin/ferredoxin reductase) and nonheme iron-sulfur protein FDX1 or FDX2 (adrenodoxin/ferredoxin). The chain is Cytochrome P450 11B3, mitochondrial (Cyp11b3) from Rattus norvegicus (Rat).